Here is a 532-residue protein sequence, read N- to C-terminus: CTP synthase (532 aa).

Positions 1–267 (MTKYIFVTGG…DDIVLEHLQL (267 aa)) are amidoligase domain. S13 contributes to the CTP binding site. Position 13 (S13) interacts with UTP. 14 to 19 (SIGKGI) is a binding site for ATP. Y54 provides a ligand contact to L-glutamine. D71 lines the ATP pocket. Residues D71 and E141 each contribute to the Mg(2+) site. CTP-binding positions include 148–150 (DIE), 188–193 (KTKPTQ), and K224. UTP-binding positions include 188–193 (KTKPTQ) and K224. A Glutamine amidotransferase type-1 domain is found at 292–532 (RIGLVGKYVS…DFVGAALKNK (241 aa)). G354 serves as a coordination point for L-glutamine. C381 serves as the catalytic Nucleophile; for glutamine hydrolysis. Residues 382–385 (LGMQ), E405, and R462 contribute to the L-glutamine site. Active-site residues include H507 and E509.

It belongs to the CTP synthase family. As to quaternary structure, homotetramer.

The enzyme catalyses UTP + L-glutamine + ATP + H2O = CTP + L-glutamate + ADP + phosphate + 2 H(+). It carries out the reaction L-glutamine + H2O = L-glutamate + NH4(+). The catalysed reaction is UTP + NH4(+) + ATP = CTP + ADP + phosphate + 2 H(+). Its pathway is pyrimidine metabolism; CTP biosynthesis via de novo pathway; CTP from UDP: step 2/2. Allosterically activated by GTP, when glutamine is the substrate; GTP has no effect on the reaction when ammonia is the substrate. The allosteric effector GTP functions by stabilizing the protein conformation that binds the tetrahedral intermediate(s) formed during glutamine hydrolysis. Inhibited by the product CTP, via allosteric rather than competitive inhibition. Its function is as follows. Catalyzes the ATP-dependent amination of UTP to CTP with either L-glutamine or ammonia as the source of nitrogen. Regulates intracellular CTP levels through interactions with the four ribonucleotide triphosphates. In Listeria monocytogenes serovar 1/2a (strain ATCC BAA-679 / EGD-e), this protein is CTP synthase.